Here is an 86-residue protein sequence, read N- to C-terminus: Cell division topological specificity factor (86 aa).

It belongs to the MinE family.

Prevents the cell division inhibition by proteins MinC and MinD at internal division sites while permitting inhibition at polar sites. This ensures cell division at the proper site by restricting the formation of a division septum at the midpoint of the long axis of the cell. This is Cell division topological specificity factor from Shewanella piezotolerans (strain WP3 / JCM 13877).